The sequence spans 1275 residues: Probable Rho-type GTPase-activating protein 2 (1275 aa).

Disordered stretches follow at residues 118-146, 213-238, 280-306, and 335-365; these read KYES…SPYE, NTKR…LKDS, SSFR…KDNN, and SSPR…SKSG. The segment covering 122 to 143 has biased composition (polar residues); that stretch reads TDSFPSSQPSRANSPQSDSYSS. 2 stretches are compositionally biased toward polar residues: residues 290 to 299 and 353 to 364; these read TPFNSDSNIS and PKHSTNNLSSKS. Ser388 carries the post-translational modification Phosphoserine. Disordered stretches follow at residues 390 to 466 and 539 to 561; these read IIEN…RSSF and FSKS…SNSK. Polar residues-rich tracts occupy residues 450–466 and 552–561; these read SLSL…RSSF and QVEKSTSNSK. Residues 719 to 836 enclose the PH domain; sequence HAQKEGVLLK…WLRAILRQVP (118 aa). Basic and acidic residues predominate over residues 957–971; it reads ADTRRNQDAPEKHVP. Disordered regions lie at residues 957 to 988 and 1254 to 1275; these read ADTR…TDQS and NGAQ…NEFF. A Rho-GAP domain is found at 1065-1275; it reads LPLNEAVNIS…DDNGEDNEFF (211 aa). Over residues 1260–1275 the composition is skewed to acidic residues; sequence SDSDVSDDNGEDNEFF.

It is found in the nucleus. Its function is as follows. GTPase-activating protein for Rho-type proteins. The sequence is that of Probable Rho-type GTPase-activating protein 2 (rga2) from Schizosaccharomyces pombe (strain 972 / ATCC 24843) (Fission yeast).